The following is a 431-amino-acid chain: Enolase (431 aa).

Position 167 (glutamine 167) interacts with (2R)-2-phosphoglycerate. Catalysis depends on glutamate 209, which acts as the Proton donor. The Mg(2+) site is built by aspartate 246, glutamate 289, and aspartate 316. (2R)-2-phosphoglycerate contacts are provided by lysine 341, arginine 370, serine 371, and lysine 392. Lysine 341 (proton acceptor) is an active-site residue.

This sequence belongs to the enolase family. Component of the RNA degradosome, a multiprotein complex involved in RNA processing and mRNA degradation. The cofactor is Mg(2+).

The protein localises to the cytoplasm. It localises to the secreted. Its subcellular location is the cell surface. The catalysed reaction is (2R)-2-phosphoglycerate = phosphoenolpyruvate + H2O. It participates in carbohydrate degradation; glycolysis; pyruvate from D-glyceraldehyde 3-phosphate: step 4/5. Functionally, catalyzes the reversible conversion of 2-phosphoglycerate (2-PG) into phosphoenolpyruvate (PEP). It is essential for the degradation of carbohydrates via glycolysis. This is Enolase from Shewanella oneidensis (strain ATCC 700550 / JCM 31522 / CIP 106686 / LMG 19005 / NCIMB 14063 / MR-1).